We begin with the raw amino-acid sequence, 166 residues long: Phospholipase A2 inhibitor (166 aa).

The first 19 residues, 1–19 (MRLILLSGLLLLGIFLANG), serve as a signal peptide directing secretion. Residues 46-161 (LRGAFLTVYK…CDDNLLVVCE (116 aa)) enclose the C-type lectin domain. Asn-61 and Asn-122 each carry an N-linked (GlcNAc...) asparagine glycan. Intrachain disulfides connect Cys-83–Cys-160 and Cys-138–Cys-152.

Belongs to the alpha-type phospholipase A2 inhibitor family. In terms of assembly, homotrimer; non-covalently linked. In terms of tissue distribution, expressed by the liver.

It localises to the secreted. In terms of biological role, this phospholipase A2 inhibitor binds directly phospholipase A2 in the presence or absence of calcium. The polypeptide is Phospholipase A2 inhibitor (Bothrops alternatus (Urutu)).